Here is a 753-residue protein sequence, read N- to C-terminus: MTILNHTLGFPRVGLRRELKKAQESYWAGNSTREELLTVGRELRARHWDQQKQAGIDLLPVGDFAWYDHVLTTSLLLGNVPPRHQNKDGSVDIDTLFRIGRGRAPTGEPAAAAEMTKWFNTNYHYMVPEFVKGQQFKLTWTQLLEEVDEALALSHNVKPVLLGPVTYLWLGKVKGEQFDRLSLLNDILPVYQQVLAELAKRGIEWVQIDEPALVLELPQAWLDAYKPAYDALQGQVKLLLTTYFEGVTPNLDTITALPVQGLHVDLVHGKDNVVELHKRLPSDWLLSAGLINGRNVWRADLTEKYAQIKDIVGKRDLWVASSCSLLHSPIDLSVETRLDAEVKSWFAFALQKCHELALLRDALNSGDTAALAEWSAPIQARRHSTRVHNPAVEKRLAAITAQDSQRANVYEVRAEAQRARFKLPAWPTTTIGSFPQTTEIRTLRLDFKKGNLDANNYRTGIAEHIKQAIVEQERLGLDVLVHGEAERNDMVEYFGEHLDGFVFTQNGWVQSYGSRCVKPPIVIGDISRPAPITVEWAKYAQSLTDKPVKGMLTGPVTILCWSFPREDVSRETIAKQIALALRDEVADLEAAGIGIIQIDEPALREGLPLRRSDWDAYLQWGVEAFRINAAVAKDDTQIHTHMCYCEFNDIMDSIAALDADVITIETSRSDMELLESFEEFDYPNEIGPGVYDIHSPNVPSVEWIEALLKKAAKRIPAERLWVNPDCGLKTRGWPETRAALANMVQAAQNLRRG.

Residues 17 to 20 (RELK) and Lys-117 contribute to the 5-methyltetrahydropteroyltri-L-glutamate site. L-homocysteine-binding positions include 431–433 (IGS) and Glu-484. L-methionine contacts are provided by residues 431-433 (IGS) and Glu-484. 5-methyltetrahydropteroyltri-L-glutamate is bound by residues 515–516 (RC) and Trp-561. Position 599 (Asp-599) interacts with L-homocysteine. Residue Asp-599 coordinates L-methionine. 5-methyltetrahydropteroyltri-L-glutamate is bound at residue Glu-605. Zn(2+)-binding residues include His-641, Cys-643, and Glu-665. The Proton donor role is filled by His-694. Cys-726 contacts Zn(2+).

Belongs to the vitamin-B12 independent methionine synthase family. Zn(2+) serves as cofactor.

It catalyses the reaction 5-methyltetrahydropteroyltri-L-glutamate + L-homocysteine = tetrahydropteroyltri-L-glutamate + L-methionine. It functions in the pathway amino-acid biosynthesis; L-methionine biosynthesis via de novo pathway; L-methionine from L-homocysteine (MetE route): step 1/1. Catalyzes the transfer of a methyl group from 5-methyltetrahydrofolate to homocysteine resulting in methionine formation. The protein is 5-methyltetrahydropteroyltriglutamate--homocysteine methyltransferase of Shigella flexneri.